A 339-amino-acid polypeptide reads, in one-letter code: Protein RecA (339 aa).

66 to 73 (GPESSGKT) provides a ligand contact to ATP.

The protein belongs to the RecA family.

Its subcellular location is the cytoplasm. Its function is as follows. Can catalyze the hydrolysis of ATP in the presence of single-stranded DNA, the ATP-dependent uptake of single-stranded DNA by duplex DNA, and the ATP-dependent hybridization of homologous single-stranded DNAs. It interacts with LexA causing its activation and leading to its autocatalytic cleavage. In Geobacter metallireducens (strain ATCC 53774 / DSM 7210 / GS-15), this protein is Protein RecA.